An 82-amino-acid chain; its full sequence is DNA-directed RNA polymerase subunit omega (82 aa).

Belongs to the RNA polymerase subunit omega family. As to quaternary structure, the RNAP catalytic core consists of 2 alpha, 1 beta, 1 beta' and 1 omega subunit. When a sigma factor is associated with the core the holoenzyme is formed, which can initiate transcription.

The catalysed reaction is RNA(n) + a ribonucleoside 5'-triphosphate = RNA(n+1) + diphosphate. Promotes RNA polymerase assembly. Latches the N- and C-terminal regions of the beta' subunit thereby facilitating its interaction with the beta and alpha subunits. This Lachnoclostridium phytofermentans (strain ATCC 700394 / DSM 18823 / ISDg) (Clostridium phytofermentans) protein is DNA-directed RNA polymerase subunit omega.